Consider the following 478-residue polypeptide: Light-independent protochlorophyllide reductase subunit N (478 aa).

[4Fe-4S] cluster is bound by residues Cys-22, Cys-47, and Cys-107.

The protein belongs to the BchN/ChlN family. As to quaternary structure, protochlorophyllide reductase is composed of three subunits; ChlL, ChlN and ChlB. Forms a heterotetramer of two ChlB and two ChlN subunits. [4Fe-4S] cluster serves as cofactor.

The protein localises to the plastid. It localises to the chloroplast. The enzyme catalyses chlorophyllide a + oxidized 2[4Fe-4S]-[ferredoxin] + 2 ADP + 2 phosphate = protochlorophyllide a + reduced 2[4Fe-4S]-[ferredoxin] + 2 ATP + 2 H2O. The protein operates within porphyrin-containing compound metabolism; chlorophyll biosynthesis (light-independent). In terms of biological role, component of the dark-operative protochlorophyllide reductase (DPOR) that uses Mg-ATP and reduced ferredoxin to reduce ring D of protochlorophyllide (Pchlide) to form chlorophyllide a (Chlide). This reaction is light-independent. The NB-protein (ChlN-ChlB) is the catalytic component of the complex. This chain is Light-independent protochlorophyllide reductase subunit N, found in Chlorokybus atmophyticus (Soil alga).